The primary structure comprises 462 residues: Solute carrier family 41 member 3 (462 aa).

The next 9 membrane-spanning stretches (helical) occupy residues 41–61 (CQVAIPILLSGLGMMTAGLVM), 121–141 (LAVVQVQATVVGLLAAVASLM), 163–183 (VITAFLAALALGILMICIVIG), 194–214 (IATPIAASLGDLITLSILALM), 225–245 (WYLTPLVCIGFLALTPLWIFI), 258–278 (YGWFPIILAMIISSFGGLILS), 351–371 (VLLFLVVPGHLIFFYLICLVE), 380–400 (IFVLLYLMAGMMQVVILLYLA), and 424–444 (GLGDLLGTSLLALCFLLDWLL).

The protein belongs to the SLC41A transporter family.

The protein resides in the mitochondrion inner membrane. The enzyme catalyses Mg(2+)(in) + 2 Na(+)(out) = Mg(2+)(out) + 2 Na(+)(in). In terms of biological role, na(+)/Mg(2+) ion exchanger that acts as a predominant Mg(2+) efflux system at the mitochondrial inner membrane. The sequence is that of Solute carrier family 41 member 3 (Slc41a3) from Rattus norvegicus (Rat).